An 85-amino-acid chain; its full sequence is Scratcher peptide (85 aa).

Residues 1 to 24 form the signal peptide; that stretch reads MTSVQSVTCCCLLWLMLSVQPITP. A propeptide spanning residues 25 to 38 is cleaved from the precursor; sequence GSPGPAQLSRERSF. A 4-carboxyglutamate modification is found at Glu-47. Asp-67 is subject to Aspartic acid 1-amide. Residues 68-85 constitute a propeptide that is removed on maturation; sequence KRDVVSPRIRRRKRSKAM.

This sequence belongs to the conotoxin J superfamily. Post-translationally, contains 2 disulfide bonds. In terms of tissue distribution, expressed by the venom duct.

It localises to the secreted. Its function is as follows. Causes scratching in mice. This chain is Scratcher peptide, found in Conus geographus (Geography cone).